Here is a 315-residue protein sequence, read N- to C-terminus: PIH1 domain-containing protein 2 (315 aa).

The protein belongs to the PIH1 family.

The polypeptide is PIH1 domain-containing protein 2 (PIH1D2) (Bos taurus (Bovine)).